The sequence spans 82 residues: UPF0298 protein SPCG_0698 (82 aa).

This sequence belongs to the UPF0298 family.

It localises to the cytoplasm. In Streptococcus pneumoniae (strain CGSP14), this protein is UPF0298 protein SPCG_0698.